The primary structure comprises 200 residues: dTDP-4-dehydrorhamnose 3,5-epimerase (200 aa).

Substrate is bound by residues arginine 21, glutamate 26, glutamine 45–asparagine 47, and arginine 57. Histidine 60 acts as the Proton acceptor in catalysis. The substrate site is built by lysine 70 and histidine 116. Tyrosine 129 (proton donor) is an active-site residue. Substrate is bound by residues glutamate 140 and lysine 165.

This sequence belongs to the dTDP-4-dehydrorhamnose 3,5-epimerase family.

The enzyme catalyses dTDP-4-dehydro-6-deoxy-alpha-D-glucose = dTDP-4-dehydro-beta-L-rhamnose. The protein operates within carbohydrate biosynthesis; dTDP-L-rhamnose biosynthesis. It participates in antibiotic biosynthesis; streptomycin biosynthesis. Involved in the biosynthesis of the dihydrostreptose moiety of streptomycin. Catalyzes the epimerization of the C3' and C5'positions of dTDP-6-deoxy-D-xylo-4-hexulose, forming dTDP-6-deoxy-L-lyxo-4-hexulose. In Streptomyces griseus, this protein is dTDP-4-dehydrorhamnose 3,5-epimerase.